Reading from the N-terminus, the 529-residue chain is Transcription factor BIM1 (529 aa).

Disordered regions lie at residues M1–P91, K245–K291, R425–L450, and A491–Q529. The span at K76–L86 shows a compositional bias: pro residues. 2 stretches are compositionally biased toward basic and acidic residues: residues H255–V265 and S282–K291. The 51-residue stretch at T276 to L326 folds into the bHLH domain. A compositionally biased stretch (low complexity) spans V426–S438. The segment covering F499–K517 has biased composition (basic and acidic residues). A compositionally biased stretch (basic residues) spans Q518 to Q529.

Homodimer. Interacts with BZR2/BES1 through both C-terminal and bHLH domains. Also interacts with LHW. Expressed constitutively in roots.

Its subcellular location is the nucleus. Functionally, positive brassinosteroid-signaling protein. Transcription factor that bind specifically to the DNA sequence 5'-CANNTG-3'(E box). Can bind individually to the promoter as a homodimer or synergistically as a heterodimer with BZR2/BES1. Does not itself activate transcription but enhances BZR2/BES1-mediated target gene activation. This Arabidopsis thaliana (Mouse-ear cress) protein is Transcription factor BIM1 (BIM1).